The chain runs to 321 residues: Gap junction delta-2 protein (321 aa).

Topologically, residues Met-1 to Ser-19 are cytoplasmic. A helical transmembrane segment spans residues Thr-20–Gly-42. Residues Glu-43–His-75 lie on the Extracellular side of the membrane. Residues Ile-76 to Val-98 traverse the membrane as a helical segment. Topologically, residues His-99 to Arg-197 are cytoplasmic. The tract at residues Pro-120–Glu-141 is disordered. The span at Gly-125–Gly-137 shows a compositional bias: gly residues. A helical membrane pass occupies residues Phe-198–Leu-220. The Extracellular portion of the chain corresponds to Tyr-221–Val-252. The chain crosses the membrane as a helical span at residues Phe-253–Leu-275. Topologically, residues Gly-276–Val-321 are cytoplasmic.

It belongs to the connexin family. Delta-type subfamily. A connexon is composed of a hexamer of connexins. Highly expressed in neurons.

The protein localises to the cell membrane. Its subcellular location is the cell junction. It localises to the gap junction. Functionally, one gap junction consists of a cluster of closely packed pairs of transmembrane channels, the connexons, through which materials of low MW diffuse from one cell to a neighboring cell. This is Gap junction delta-2 protein (Gjd2) from Rattus norvegicus (Rat).